A 116-amino-acid polypeptide reads, in one-letter code: ATP-dependent Clp protease adapter protein ClpS (116 aa).

Over residues 1–11 the composition is skewed to polar residues; the sequence is MRRFNTIMQGK. Residues 1-23 are disordered; it reads MRRFNTIMQGKTNGGNGPESGTV.

This sequence belongs to the ClpS family. As to quaternary structure, binds to the N-terminal domain of the chaperone ClpA.

Involved in the modulation of the specificity of the ClpAP-mediated ATP-dependent protein degradation. The polypeptide is ATP-dependent Clp protease adapter protein ClpS (Brucella melitensis biotype 2 (strain ATCC 23457)).